Consider the following 165-residue polypeptide: Probable calcium-binding protein CML18 (165 aa).

EF-hand domains lie at 16-51 (EQLAELREIFRSFDQNKDGSLTELELGSLLRSLGLK), 52-87 (PSQDQLDTLIQKADRNNNGLVEFSEFVALVEPDLVK), 90-125 (YTDDQLKAIFRMFDRDGNGYITAAELAHSMAKLGHA), and 126-161 (LTAEELTGMIKEADRDGDGCIDFQEFVQAITSAAFD). Asp29, Asn31, Asp33, Ser35, Glu40, Asp65, Asn67, Asn69, Glu76, Asp103, Asp105, Asn107, Tyr109, Glu114, Asp139, Asp141, Asp143, Cys145, and Glu150 together coordinate Ca(2+).

Calcium and pH-dependent interaction with NHX1 (increases when pH decreases, better at pH 5.5 than at pH 7.5). Also interacts with the CPB protein At2g18750.

It is found in the vacuole. Functionally, potential calcium sensor that modulates ion selectivity of NHX1. This Arabidopsis thaliana (Mouse-ear cress) protein is Probable calcium-binding protein CML18 (CML18).